We begin with the raw amino-acid sequence, 363 residues long: Anhydro-N-acetylmuramic acid kinase (363 aa).

ATP is bound at residue 10 to 17; the sequence is GTSLDGLD.

The protein belongs to the anhydro-N-acetylmuramic acid kinase family.

The catalysed reaction is 1,6-anhydro-N-acetyl-beta-muramate + ATP + H2O = N-acetyl-D-muramate 6-phosphate + ADP + H(+). It participates in amino-sugar metabolism; 1,6-anhydro-N-acetylmuramate degradation. The protein operates within cell wall biogenesis; peptidoglycan recycling. Its function is as follows. Catalyzes the specific phosphorylation of 1,6-anhydro-N-acetylmuramic acid (anhMurNAc) with the simultaneous cleavage of the 1,6-anhydro ring, generating MurNAc-6-P. Is required for the utilization of anhMurNAc either imported from the medium or derived from its own cell wall murein, and thus plays a role in cell wall recycling. Contributes to intrinsic fosfomycin resistance in P.putida. This Pseudomonas putida (strain ATCC 47054 / DSM 6125 / CFBP 8728 / NCIMB 11950 / KT2440) protein is Anhydro-N-acetylmuramic acid kinase.